A 206-amino-acid polypeptide reads, in one-letter code: uncharacterized protein (206 aa).

The YrdC-like domain occupies 14 to 200; the sequence is QRLINQAVEI…TPVVVREGVG (187 aa).

It belongs to the SUA5 family.

This is an uncharacterized protein from Escherichia coli O6:H1 (strain CFT073 / ATCC 700928 / UPEC).